The primary structure comprises 283 residues: Formamidopyrimidine-DNA glycosylase (283 aa).

Pro2 acts as the Schiff-base intermediate with DNA in catalysis. Catalysis depends on Glu3, which acts as the Proton donor. Lys58 serves as the catalytic Proton donor; for beta-elimination activity. DNA contacts are provided by His100, Arg119, and Arg162. Residues 247–283 (RVYGREGLPCVTPGCSGTVGRIVQSGRSSFHCPLCQR) form an FPG-type zinc finger. Arg273 functions as the Proton donor; for delta-elimination activity in the catalytic mechanism.

The protein belongs to the FPG family. As to quaternary structure, monomer. Requires Zn(2+) as cofactor.

The enzyme catalyses Hydrolysis of DNA containing ring-opened 7-methylguanine residues, releasing 2,6-diamino-4-hydroxy-5-(N-methyl)formamidopyrimidine.. It carries out the reaction 2'-deoxyribonucleotide-(2'-deoxyribose 5'-phosphate)-2'-deoxyribonucleotide-DNA = a 3'-end 2'-deoxyribonucleotide-(2,3-dehydro-2,3-deoxyribose 5'-phosphate)-DNA + a 5'-end 5'-phospho-2'-deoxyribonucleoside-DNA + H(+). Involved in base excision repair of DNA damaged by oxidation or by mutagenic agents. Acts as a DNA glycosylase that recognizes and removes damaged bases. Has a preference for oxidized purines, such as 7,8-dihydro-8-oxoguanine (8-oxoG). Has AP (apurinic/apyrimidinic) lyase activity and introduces nicks in the DNA strand. Cleaves the DNA backbone by beta-delta elimination to generate a single-strand break at the site of the removed base with both 3'- and 5'-phosphates. The chain is Formamidopyrimidine-DNA glycosylase from Cereibacter sphaeroides (strain ATCC 17029 / ATH 2.4.9) (Rhodobacter sphaeroides).